Here is a 376-residue protein sequence, read N- to C-terminus: Serine/threonine-protein kinase-transforming protein mos (376 aa).

Residues 94-376 form the Protein kinase domain; it reads VCLMHRLGSG…KALADSIEPM (283 aa). ATP-binding positions include 100–108 and lysine 121; that span reads LGSGGFGSV. Aspartate 229 acts as the Proton acceptor in catalysis.

This sequence belongs to the protein kinase superfamily. Ser/Thr protein kinase family.

The catalysed reaction is L-seryl-[protein] + ATP = O-phospho-L-seryl-[protein] + ADP + H(+). The enzyme catalyses L-threonyl-[protein] + ATP = O-phospho-L-threonyl-[protein] + ADP + H(+). The polypeptide is Serine/threonine-protein kinase-transforming protein mos (V-MOS) (Moloney murine sarcoma virus (strain m1) (MoMSV)).